Reading from the N-terminus, the 202-residue chain is Snake venom metalloproteinase Ac1 (202 aa).

The 197-residue stretch at 6-202 (RYMEIVIVVD…ENPPCILNKP (197 aa)) folds into the Peptidase M12B domain. Positions 9 and 93 each coordinate Ca(2+). Cystine bridges form between C117/C197 and C157/C181. Residue H142 coordinates Zn(2+). E143 is an active-site residue. Residues H146 and H152 each coordinate Zn(2+). 2 residues coordinate Ca(2+): C197 and N200.

Belongs to the venom metalloproteinase (M12B) family. P-I subfamily. Monomer. Zn(2+) serves as cofactor. Expressed by the venom gland.

The protein localises to the secreted. Its function is as follows. Snake venom metalloproteinase that impairs hemostasis in the envenomed animal. This chain is Snake venom metalloproteinase Ac1, found in Deinagkistrodon acutus (Hundred-pace snake).